We begin with the raw amino-acid sequence, 664 residues long: 1,4-alpha-glucan branching enzyme GlgB 2 (664 aa).

Residues 1-17 (MGGKEMRNCKELKHEKN) show a composition bias toward basic and acidic residues. The tract at residues 1–31 (MGGKEMRNCKELKHEKNGNVTEKVGKNKGKS) is disordered. Catalysis depends on Asp-342, which acts as the Nucleophile. Residue Glu-395 is the Proton donor of the active site.

The protein belongs to the glycosyl hydrolase 13 family. GlgB subfamily. As to quaternary structure, monomer.

The catalysed reaction is Transfers a segment of a (1-&gt;4)-alpha-D-glucan chain to a primary hydroxy group in a similar glucan chain.. It participates in glycan biosynthesis; glycogen biosynthesis. Catalyzes the formation of the alpha-1,6-glucosidic linkages in glycogen by scission of a 1,4-alpha-linked oligosaccharide from growing alpha-1,4-glucan chains and the subsequent attachment of the oligosaccharide to the alpha-1,6 position. This chain is 1,4-alpha-glucan branching enzyme GlgB 2 (glgB2), found in Clostridium perfringens (strain 13 / Type A).